The following is a 417-amino-acid chain: Serine protease hepsin (417 aa).

Residues 1–23 (MAQKEGGRTVPCCSRPKVAALTA) are Cytoplasmic-facing. Residues 24 to 44 (GTLLLLTAIGAASWAIVAVLL) traverse the membrane as a helical; Signal-anchor for type II membrane protein segment. Residues 45-417 (RSDQEPLYPV…SEASGMVTQL (373 aa)) are Extracellular-facing. The region spanning 54–151 (VQVSSADARL…RGRFLAAICQ (98 aa)) is the SRCR domain. Cystine bridges form between C77–C140, C90–C150, C119–C138, C153–C277, C188–C204, C291–C359, C322–C338, and C349–C381. N112 carries N-linked (GlcNAc...) asparagine glycosylation. Positions 163 to 405 (IVGGRDTSLG…FREWIFQAIK (243 aa)) constitute a Peptidase S1 domain. Active-site charge relay system residues include H203 and D257. Catalysis depends on S353, which acts as the Charge relay system.

It belongs to the peptidase S1 family. Detected in liver and kidney.

It is found in the cell membrane. The protein resides in the apical cell membrane. The catalysed reaction is Cleavage after basic amino-acid residues, with Arg strongly preferred to Lys.. Serine protease that cleaves extracellular substrates, and contributes to the proteolytic processing of growth factors, such as HGF and MST1/HGFL. Plays a role in cell growth and maintenance of cell morphology. Plays a role in the proteolytic processing of ACE2. Mediates the proteolytic cleavage of urinary UMOD that is required for UMOD polymerization. In Homo sapiens (Human), this protein is Serine protease hepsin (HPN).